A 403-amino-acid chain; its full sequence is Double C2-like domain-containing protein alpha (403 aa).

Positions 1–92 (MRGRRGDRMT…DSYDSDDTTA (92 aa)) are interaction with UNC13D and DYNLT1. 2 consecutive C2 domains span residues 92-214 (ALGT…HFNI) and 254-387 (ERGR…ERWH). The Ca(2+) site is built by Asp123, Asp129, Asp184, Asp186, Asp285, Asp291, Asp345, Asp347, and Asp353. Residues 218–403 (RQVPLPSPSS…PPAAGALPLA (186 aa)) form an interaction with UNC13D region.

As to quaternary structure, interacts (via N-terminus) with UNC13A. Interacts with cytoplasmic dynein light chain DYNLT1. Interacts with UNC13D. It depends on Ca(2+) as a cofactor. In terms of tissue distribution, predominantly expressed in brain. Also found in non-neural tissues. Expressed in RBL-2H3 mast cell line.

It is found in the cytoplasmic vesicle. It localises to the secretory vesicle. The protein localises to the synaptic vesicle membrane. Its subcellular location is the synapse. The protein resides in the synaptosome. It is found in the lysosome. Functionally, calcium sensor which most probably regulates fusion of vesicles with membranes. Binds calcium and phospholipids. May be involved in calcium dependent neurotransmitter release through the interaction with UNC13A. May be involved in calcium-dependent spontaneous release of neurotransmitter in absence of action potentials in neuronal cells. Regulates Ca(2+)-dependent secretory lysosome exocytosis in mast cells. This is Double C2-like domain-containing protein alpha (Doc2a) from Rattus norvegicus (Rat).